A 552-amino-acid polypeptide reads, in one-letter code: Scavenger receptor class B member 1 (552 aa).

Over 1-11 the chain is Cytoplasmic; sequence MGCSAKARWAA. Residues 12 to 32 traverse the membrane as a helical segment; that stretch reads GALGVAGLLCAVLGAVMIVMV. The Extracellular portion of the chain corresponds to 33-443; that stretch reads PSLIKQQVLK…LVLMPKVMHY (411 aa). Residues Asn-102, Asn-108, Asn-173, Asn-212, Asn-227, Asn-255, Asn-310, Asn-330, and Asn-383 are each glycosylated (N-linked (GlcNAc...) asparagine). A disulfide bridge connects residues Cys-251 and Cys-384. Phosphoserine occurs at positions 393 and 458. A helical membrane pass occupies residues 444-464; that stretch reads AQYVLLALGCVLLLVPVICQI. Cys-462 carries the S-palmitoyl cysteine lipid modification. At 465–552 the chain is on the cytoplasmic side; sequence RSQVGAGQRA…GPSLGGGTGS (88 aa). Thr-493 is subject to Phosphoserine.

This sequence belongs to the CD36 family. The C-terminal region binds to PDZK1. As to quaternary structure, (Microbial infection) Interacts with hepatitis C virus E1:E2 glycoproteins. N-glycosylated. In terms of processing, the six cysteines of the extracellular domain are all involved in intramolecular disulfide bonds. As to expression, widely expressed.

Its subcellular location is the cell membrane. The protein localises to the membrane. The protein resides in the caveola. In terms of biological role, receptor for different ligands such as phospholipids, cholesterol ester, lipoproteins, phosphatidylserine and apoptotic cells. Receptor for HDL, mediating selective uptake of cholesteryl ether and HDL-dependent cholesterol efflux. Also facilitates the flux of free and esterified cholesterol between the cell surface and apoB-containing lipoproteins and modified lipoproteins, although less efficiently than HDL. May be involved in the phagocytosis of apoptotic cells, via its phosphatidylserine binding activity. Its function is as follows. (Microbial infection) Acts as a receptor for hepatitis C virus in hepatocytes and appears to facilitate its cell entry. Binding between SCARB1 and the hepatitis C virus glycoprotein E2 is independent of the genotype of the viral isolate. Functionally, (Microbial infection) Mediates uptake of M.fortuitum, E.coli and S.aureus. (Microbial infection) Facilitates the entry of human coronavirus SARS-CoV-2 by acting as an entry cofactor through HDL binding. The protein is Scavenger receptor class B member 1 (SCARB1) of Homo sapiens (Human).